Reading from the N-terminus, the 426-residue chain is uncharacterized protein (426 aa).

This is an uncharacterized protein from Corynebacterium glutamicum (strain ATCC 13032 / DSM 20300 / JCM 1318 / BCRC 11384 / CCUG 27702 / LMG 3730 / NBRC 12168 / NCIMB 10025 / NRRL B-2784 / 534).